We begin with the raw amino-acid sequence, 273 residues long: Type III pantothenate kinase (273 aa).

5–12 (DVGNSHVV) serves as a coordination point for ATP. 112 to 115 (GTDL) serves as a coordination point for substrate. Asp114 acts as the Proton acceptor in catalysis. Residue Asp134 coordinates K(+). Residue Thr137 participates in ATP binding. Thr189 provides a ligand contact to substrate.

This sequence belongs to the type III pantothenate kinase family. Homodimer. NH4(+) serves as cofactor. The cofactor is K(+).

It is found in the cytoplasm. It carries out the reaction (R)-pantothenate + ATP = (R)-4'-phosphopantothenate + ADP + H(+). The protein operates within cofactor biosynthesis; coenzyme A biosynthesis; CoA from (R)-pantothenate: step 1/5. Functionally, catalyzes the phosphorylation of pantothenate (Pan), the first step in CoA biosynthesis. In Treponema pallidum (strain Nichols), this protein is Type III pantothenate kinase.